The primary structure comprises 622 residues: DNA mismatch repair protein MutL (622 aa).

Belongs to the DNA mismatch repair MutL/HexB family.

This protein is involved in the repair of mismatches in DNA. It is required for dam-dependent methyl-directed DNA mismatch repair. May act as a 'molecular matchmaker', a protein that promotes the formation of a stable complex between two or more DNA-binding proteins in an ATP-dependent manner without itself being part of a final effector complex. The sequence is that of DNA mismatch repair protein MutL from Clostridium acetobutylicum (strain ATCC 824 / DSM 792 / JCM 1419 / IAM 19013 / LMG 5710 / NBRC 13948 / NRRL B-527 / VKM B-1787 / 2291 / W).